The sequence spans 805 residues: Shutoff protein (805 aa).

The tract at residues M1 to G88 is disordered. The span at T18–T29 shows a compositional bias: polar residues. Composition is skewed to basic and acidic residues over residues R59 to Q70 and Q79 to G88. Residues V280–C345 form a binding to host EIF4G region. The RRM domain maps to R348–S466. Phosphotyrosine; by host is present on residues Y365 and Y682. A disordered region spans residues D684–P805. Gly residues predominate over residues G726–G742. The segment covering R754–R763 has biased composition (basic residues).

It belongs to the adenoviridae shutoff protein family. Monomer. Interacts with hexon protein; this interaction allows chaperoning and trimerization of hexon proteins. Interacts (via N-terminus) with host initiation factor EIF4G (via C-terminus). Interacts (via RRM domain) with viral mRNAs that contain the tripartite leader; this interaction allows ribosome shunting and expression of viral late mRNAs. Post-translationally, might be cleaved by the viral protease. In terms of processing, phosphorylated. Tyrosine phosphorylation enhances preferential binding to tripartite leader mRNAs and allows ribosome shunting. Methylated. Asymmetric dimethylation by host PRMT1 of the Arg/Gly-rich region may regulate shutoff protein binding to hexon and promote the capsid assembly in the nucleus.

Its subcellular location is the host cytoplasm. In terms of biological role, protein that inhibits host translation while promoting late viral translation by ribosome shunting. Blocks host cap-dependent translation by binding to eIF4G, displacing MKNK1 from cap initiation complexes and preventing EIF4E phosphorylation. Binds to the tripartite leader sequence of viral late mRNAs and recruits host eIF4G, PABPC1/poly-A binding protein and 40S ribosomes subunits on viral mRNAs, allowing ribosome shunting and efficient translation of late viral mRNAs even though conventional translation via ribosome scanning from the cap has been shut off in the host cell. During assembly, acts as a chaperone protein that helps hexon proteins assembly into trimers. The protein is Shutoff protein of Homo sapiens (Human).